A 399-amino-acid polypeptide reads, in one-letter code: MSRAIVLVLDSFGIGSAPDADKFGDEGADTFGHIAEYRYQHGQPLQLPNLTRLGLAEAHKEATGTYAKGFHEVETHGAYACAAELSSGKDTPSGHWELMGVPVHFEWGYFQDKENSFPNELLAQILKACELDGYLGNCHASGTEILKQLGEQHIRSSYPIFYTSADSVFQIAAHEEHFGLERLYQVCEKVRALIEPYNIGRVIARPFVGDKADNFERTANRKDYSVLPPKPTVLDKLQNKGGKVIAIGKISDIFAGQGVSESVKASGLNGLLTATLNAMEKAPENTLIFTNLVDFDTLYGHRRDIDGYARELETFDQWLPVIESAMTPDDVLVLTADHGCDPTWQGTDHTRELIPLLLSGQNVQAGNRGKRHSFADLGQTLCRLFDLPAMEEGKAIKLS.

6 residues coordinate Mn(2+): Asp10, Asp296, His301, Asp337, His338, and His349.

This sequence belongs to the phosphopentomutase family. Mn(2+) is required as a cofactor.

The protein localises to the cytoplasm. The catalysed reaction is 2-deoxy-alpha-D-ribose 1-phosphate = 2-deoxy-D-ribose 5-phosphate. It carries out the reaction alpha-D-ribose 1-phosphate = D-ribose 5-phosphate. It participates in carbohydrate degradation; 2-deoxy-D-ribose 1-phosphate degradation; D-glyceraldehyde 3-phosphate and acetaldehyde from 2-deoxy-alpha-D-ribose 1-phosphate: step 1/2. In terms of biological role, isomerase that catalyzes the conversion of deoxy-ribose 1-phosphate (dRib-1-P) and ribose 1-phosphate (Rib-1-P) to deoxy-ribose 5-phosphate (dRib-5-P) and ribose 5-phosphate (Rib-5-P), respectively. This Idiomarina loihiensis (strain ATCC BAA-735 / DSM 15497 / L2-TR) protein is Phosphopentomutase.